Consider the following 333-residue polypeptide: MSNLITIERHILEQQKFFPEAHGELTDLLTDVAFAAKLVRREVVRAGLVDILGLAGSTNVQGEEVKKLDLFANEQIISAIGAHGRFAVMGSEENEEIIIPTNNESGNYVLLFDPLDGSSNIDVNVSVGTIFSIYKLKTSDPAKASLADCLQAGSEQVAAGYVIYGSSVVMVYTTGHGVHGFTYDPTIGEFLLSDENITTPKRGKYYSMNEGSYAQFNEGTKRYLDYIKTEDKATNRPYSTRYIGSLVADFHRNLLTGGIFIYPPTGKHPNGKLRLMYEANPLAFICEQAGGRATNGKERILDIKPTELHQRTPLYIGSTDDVMVAEEFEQGKR.

Residues Glu92, Asp113, Leu115, and Asp116 each contribute to the Mg(2+) site. Substrate contacts are provided by residues Asp116–Ser119, Asn209, Tyr242, and Lys272. Glu278 contacts Mg(2+).

The protein belongs to the FBPase class 1 family. In terms of assembly, homotetramer. Mg(2+) serves as cofactor.

It is found in the cytoplasm. The enzyme catalyses beta-D-fructose 1,6-bisphosphate + H2O = beta-D-fructose 6-phosphate + phosphate. It participates in carbohydrate biosynthesis; Calvin cycle. This chain is Fructose-1,6-bisphosphatase class 1, found in Chlorobium chlorochromatii (strain CaD3).